Reading from the N-terminus, the 263-residue chain is 3-deoxy-manno-octulosonate cytidylyltransferase 1 (263 aa).

This sequence belongs to the KdsB family.

It localises to the cytoplasm. The enzyme catalyses 3-deoxy-alpha-D-manno-oct-2-ulosonate + CTP = CMP-3-deoxy-beta-D-manno-octulosonate + diphosphate. Its pathway is nucleotide-sugar biosynthesis; CMP-3-deoxy-D-manno-octulosonate biosynthesis; CMP-3-deoxy-D-manno-octulosonate from 3-deoxy-D-manno-octulosonate and CTP: step 1/1. It participates in bacterial outer membrane biogenesis; lipopolysaccharide biosynthesis. Activates KDO (a required 8-carbon sugar) for incorporation into bacterial lipopolysaccharide in Gram-negative bacteria. The sequence is that of 3-deoxy-manno-octulosonate cytidylyltransferase 1 from Burkholderia ambifaria (strain ATCC BAA-244 / DSM 16087 / CCUG 44356 / LMG 19182 / AMMD) (Burkholderia cepacia (strain AMMD)).